Consider the following 214-residue polypeptide: LexA repressor (214 aa).

Positions 26 to 46 form a DNA-binding region, H-T-H motif; it reads VREIGEAVGLSSSSTVHSYLK. Catalysis depends on for autocatalytic cleavage activity residues S138 and K175.

Belongs to the peptidase S24 family. As to quaternary structure, homodimer.

The catalysed reaction is Hydrolysis of Ala-|-Gly bond in repressor LexA.. In terms of biological role, represses a number of genes involved in the response to DNA damage (SOS response), including recA and lexA. In the presence of single-stranded DNA, RecA interacts with LexA causing an autocatalytic cleavage which disrupts the DNA-binding part of LexA, leading to derepression of the SOS regulon and eventually DNA repair. The chain is LexA repressor from Desulforamulus reducens (strain ATCC BAA-1160 / DSM 100696 / MI-1) (Desulfotomaculum reducens).